The primary structure comprises 716 residues: Inhibitor of nuclear factor kappa-B kinase subunit epsilon (716 aa).

In terms of domain architecture, Protein kinase spans Trp9–Ser315. ATP is bound at residue Leu15–Val23. Residue Lys30 forms a Glycyl lysine isopeptide (Lys-Gly) (interchain with G-Cter in ubiquitin) linkage. Lys38 provides a ligand contact to ATP. Residue Asp135 is the Proton acceptor of the active site. A Phosphoserine; by autocatalysis and IKKB modification is found at Ser172. Residue Lys231 forms a Glycyl lysine isopeptide (Lys-Gly) (interchain with G-Cter in SUMO1) linkage. The tract at residues Ser383–Glu647 is interaction with DDX3X. Lys401 participates in a covalent cross-link: Glycyl lysine isopeptide (Lys-Gly) (interchain with G-Cter in ubiquitin). The tract at residues Gln436 to Thr457 is leucine-zipper. Thr501 carries the post-translational modification Phosphothreonine. Ser664 carries the post-translational modification Phosphoserine.

Belongs to the protein kinase superfamily. Ser/Thr protein kinase family. I-kappa-B kinase subfamily. As to quaternary structure, homodimer. Interacts with MAVS/IPS1. Interacts (via protein kinase domain) with TTLL12 (via N-terminus); the interaction prevents MAVS binding to IKBKE. Interacts with the adapter proteins AZI2/NAP1, TANK and TBKBP1/SINTBAD. Interacts with SIKE1. Interacts with TICAM1/TRIF, IRF3 and RIGI; interactions are disrupted by the interaction between IKBKE and SIKE1. Interacts with TOPORS; induced by DNA damage. Interacts with CYLD. Interacts (when polyubiquitinated) with IKBKB, IKBKG and MYD88. Interacts with IFIH1. Interacts with DDX3X; the interaction may be induced upon virus infection. Interacts with TRIM6 (via SPRY box). Interacts with unanchored K48-linked polyubiquitin chains; this leads to IKBKE activation. Interacts with TBK1. Interacts with FKBP5. In terms of assembly, (Microbial infection) Interacts (via Protein kinase domain) with arenavirus protein N; the interaction inhibits IKBKE kinase function. (Microbial infection) Interacts with Ebola virus protein VP35; the interaction leads to inhibition of cellular antiviral response by blocking necessary interactions between the IKBKE and MAVS/IPS as well as its substrates IRF3 and IRF7. As to quaternary structure, (Microbial infection) Interacts with Severe fever with thrombocytopenia virus (SFTSV) NSs; this interaction this interaction sequesters IKBKE in NSs-induced cytoplasmic inclusion bodies thereby inhibiting the IFN responses. In terms of assembly, (Microbial infection) Interacts with human T-cell leukemia virus 1/HTLV-1 protein HBZ. (Microbial infection) Interacts with Epstein-Barr virus (EBV) protein NEC2/BFRF1; this interaction inhibits IKBKE kinase activity and IRF3 nuclear translocation. In terms of processing, autophosphorylated and phosphorylated by IKBKB/IKKB. Phosphorylation at Ser-172 is enhanced by the interaction with DDX3X. Phosphorylated at Thr-501 upon IFN activation. Post-translationally, sumoylation by TOPORS upon DNA damage is required for protection of cells against DNA damage-induced cell death. Desumoylated by SENP1. 'Lys-63'-linked polyubiquitinated at Lys-30 and Lys-401 by TRAF2:BIRC2 and TRAF2:BIRC3 complexes. Ubiquitination is induced by LPS, TNFA and interleukin-1 and required for full kinase activity and KF-kappa-B pathway activation. In terms of tissue distribution, highly expressed in spleen followed by thymus, peripheral blood leukocytes, pancreas, placenta. Weakly expressed in lung, kidney, prostate, ovary and colon.

Its subcellular location is the cytoplasm. It is found in the nucleus. The protein resides in the PML body. It carries out the reaction L-seryl-[I-kappa-B protein] + ATP = O-phospho-L-seryl-[I-kappa-B protein] + ADP + H(+). Its function is as follows. Serine/threonine kinase that plays an essential role in regulating inflammatory responses to viral infection, through the activation of the type I IFN, NF-kappa-B and STAT signaling. Also involved in TNFA and inflammatory cytokines, like Interleukin-1, signaling. Following activation of viral RNA sensors, such as RIG-I-like receptors, associates with DDX3X and phosphorylates interferon regulatory factors (IRFs), IRF3 and IRF7, as well as DDX3X. This activity allows subsequent homodimerization and nuclear translocation of the IRF3 leading to transcriptional activation of pro-inflammatory and antiviral genes including IFNB. In order to establish such an antiviral state, IKBKE forms several different complexes whose composition depends on the type of cell and cellular stimuli. Thus, several scaffolding molecules including IPS1/MAVS, TANK, AZI2/NAP1 or TBKBP1/SINTBAD can be recruited to the IKBKE-containing-complexes. Activated by polyubiquitination in response to TNFA and interleukin-1, regulates the NF-kappa-B signaling pathway through, at least, the phosphorylation of CYLD. Phosphorylates inhibitors of NF-kappa-B thus leading to the dissociation of the inhibitor/NF-kappa-B complex and ultimately the degradation of the inhibitor. In addition, is also required for the induction of a subset of ISGs which displays antiviral activity, may be through the phosphorylation of STAT1 at 'Ser-708'. Phosphorylation of STAT1 at 'Ser-708' also seems to promote the assembly and DNA binding of ISGF3 (STAT1:STAT2:IRF9) complexes compared to GAF (STAT1:STAT1) complexes, in this way regulating the balance between type I and type II IFN responses. Protects cells against DNA damage-induced cell death. Also plays an important role in energy balance regulation by sustaining a state of chronic, low-grade inflammation in obesity, wich leads to a negative impact on insulin sensitivity. Phosphorylates AKT1. This Homo sapiens (Human) protein is Inhibitor of nuclear factor kappa-B kinase subunit epsilon (IKBKE).